The primary structure comprises 451 residues: Probable D-serine dehydratase (451 aa).

Lys119 is subject to N6-(pyridoxal phosphate)lysine.

It belongs to the serine/threonine dehydratase family. DsdA subfamily. It depends on pyridoxal 5'-phosphate as a cofactor.

The catalysed reaction is D-serine = pyruvate + NH4(+). The protein is Probable D-serine dehydratase of Acidovorax ebreus (strain TPSY) (Diaphorobacter sp. (strain TPSY)).